We begin with the raw amino-acid sequence, 299 residues long: ATP phosphoribosyltransferase (299 aa).

Belongs to the ATP phosphoribosyltransferase family. Long subfamily. Mg(2+) serves as cofactor.

It localises to the cytoplasm. The catalysed reaction is 1-(5-phospho-beta-D-ribosyl)-ATP + diphosphate = 5-phospho-alpha-D-ribose 1-diphosphate + ATP. It functions in the pathway amino-acid biosynthesis; L-histidine biosynthesis; L-histidine from 5-phospho-alpha-D-ribose 1-diphosphate: step 1/9. Feedback inhibited by histidine. In terms of biological role, catalyzes the condensation of ATP and 5-phosphoribose 1-diphosphate to form N'-(5'-phosphoribosyl)-ATP (PR-ATP). Has a crucial role in the pathway because the rate of histidine biosynthesis seems to be controlled primarily by regulation of HisG enzymatic activity. This Mannheimia succiniciproducens (strain KCTC 0769BP / MBEL55E) protein is ATP phosphoribosyltransferase.